Consider the following 1065-residue polypeptide: Valine--tRNA ligase, mitochondrial (1065 aa).

Residues M1–G15 constitute a mitochondrion transit peptide. The tract at residues A27 to R52 is disordered. Positions R42–R52 are enriched in basic and acidic residues. Positions P146–H156 match the 'HIGH' region motif. The 'KMSKS' region motif lies at K659–S663. K662 serves as a coordination point for ATP.

This sequence belongs to the class-I aminoacyl-tRNA synthetase family.

Its subcellular location is the mitochondrion. The catalysed reaction is tRNA(Val) + L-valine + ATP = L-valyl-tRNA(Val) + AMP + diphosphate. Catalyzes the attachment of valine to tRNA(Val) in a two-step reaction: valine is first activated by ATP to form Val-AMP and then transferred to the acceptor end of tRNA(Val). The polypeptide is Valine--tRNA ligase, mitochondrial (Vars2) (Rattus norvegicus (Rat)).